A 309-amino-acid chain; its full sequence is MTELDVVVQEIAEEIAARSDRGSVAHYIPELAKVDPAGFGLVVIDADGHVAAGGDADTAFSIQSISKVFTLTLALGKIGDRLWQRVGREPSGSPFNSIVQLEFERGIPRNPFINAGAIAVTDVILSGHQPREALGEILRFMRFLTGDPTIAIDQAVAASEQRTGFRNAALANYMKSFGVLDNPVDYTLGVYFHHCAIAMSCRQLALAGRYLAHSGRNPSTGHSVVSPGRARRINAVMLTCGHYDGSGEFAYRVGLPGKSGVGGGVLAIAPGKASIAAWSPGLDASGNSHLGRVALEALSKRMGWSIFGV.

Residues S64, N114, E160, N167, Y191, Y243, and V261 each contribute to the substrate site.

This sequence belongs to the glutaminase family. Homotetramer.

The catalysed reaction is L-glutamine + H2O = L-glutamate + NH4(+). The protein is Glutaminase of Rhodopseudomonas palustris (strain BisB18).